The primary structure comprises 251 residues: MRKNIVAGNWKMNKTLQEGIALAKELNEALANEKPNCDVIICTPFIHLASVTPLVDAAKIGVGAENCADKESGAYTGEVSAAMVASTGAKYVILGHSERRAYYGETVEILKDKVKLALANGLTPIFCIGEVLEEREANKQNEVVAAQLASVFDLSAEDFSKIVLAYEPVWAIGTGKTASPAQAQEIHAFIRSAVAEKYGKEIADNTSILYGGSCKPSNAKELFANPDVDGGLIGGAALKVADFKGIIDAFN.

9–11 contacts substrate; sequence NWK. Catalysis depends on histidine 96, which acts as the Electrophile. Glutamate 167 acts as the Proton acceptor in catalysis. Substrate contacts are provided by residues glycine 173, serine 213, and 234 to 235; that span reads GG.

Belongs to the triosephosphate isomerase family. Homodimer.

The protein localises to the cytoplasm. The enzyme catalyses D-glyceraldehyde 3-phosphate = dihydroxyacetone phosphate. Its pathway is carbohydrate biosynthesis; gluconeogenesis. It participates in carbohydrate degradation; glycolysis; D-glyceraldehyde 3-phosphate from glycerone phosphate: step 1/1. Involved in the gluconeogenesis. Catalyzes stereospecifically the conversion of dihydroxyacetone phosphate (DHAP) to D-glyceraldehyde-3-phosphate (G3P). This Bacteroides fragilis (strain ATCC 25285 / DSM 2151 / CCUG 4856 / JCM 11019 / LMG 10263 / NCTC 9343 / Onslow / VPI 2553 / EN-2) protein is Triosephosphate isomerase.